We begin with the raw amino-acid sequence, 257 residues long: (R)-2-haloacid dehalogenase (257 aa).

This sequence belongs to the HAD-like hydrolase superfamily. S-2-haloalkanoic acid dehalogenase family.

It carries out the reaction an (R)-2-haloacid + H2O = a (2S)-2-hydroxycarboxylate + a halide anion + H(+). Functionally, catalyzes the hydrolytic dehalogenation of small (R)-2-haloalkanoic acids to yield the corresponding (S)-2-hydroxyalkanoic acids. Acts on acids of short chain lengths, C(2) to C(4), with inversion of configuration at C-2. The sequence is that of (R)-2-haloacid dehalogenase (dehI) from Rhizobium sp. (strain NHG3).